A 599-amino-acid polypeptide reads, in one-letter code: E3 ubiquitin-protein ligase Kcmf1 (599 aa).

The ZZ-type zinc-finger motif lies at 4 to 60; that stretch reads HEGVSCDSCLKSNFNGRRYKCLICYDYDLCADCYEDGVTSTRHLVEHPMQCILTRSD. The Zn(2+) site is built by Cys9, Cys12, Cys24, Cys27, Cys33, Cys36, His46, and His50. The C2H2-type zinc finger occupies 78 to 101; it reads FTCPYCKKMGFSDATLLEHVSAEH. Disordered stretches follow at residues 155-193, 229-253, 269-294, 466-486, and 507-599; these read HGGG…PSGR, DRQQ…VSTS, GSGG…NLRT, VEQQ…VNQM, and NTTQ…PDTR. Composition is skewed to low complexity over residues 160–170 and 180–192; these read RRIPGRTLGGP and SSSS…SPSG. The span at 269–285 shows a compositional bias: gly residues; the sequence is GSGGSGAVGSGSGGGSG. Residues 513-532 are compositionally biased toward gly residues; sequence GTGGLGGAGATAAPGGGASG. Residues 538-547 show a composition bias toward basic and acidic residues; that stretch reads TADRGIERRS. A compositionally biased stretch (low complexity) spans 559 to 593; the sequence is SQQPQQQQQSTANPAASQQKYKQNASAATAAGNTN.

Belongs to the KCMF1 family. In terms of assembly, interacts with poe.

It carries out the reaction S-ubiquitinyl-[E2 ubiquitin-conjugating enzyme]-L-cysteine + [acceptor protein]-L-lysine = [E2 ubiquitin-conjugating enzyme]-L-cysteine + N(6)-ubiquitinyl-[acceptor protein]-L-lysine.. Has intrinsic E3 ubiquitin ligase activity and promotes ubiquitination. Involved in the negative regulation of the Ras/MAPK signaling pathway in the wing by acting with the E2 enzyme Unc6 and the putative E3 ligases poe and Ufd4 to mediate the ubiquitination and proteasomal degradation of rl/MAPK. The sequence is that of E3 ubiquitin-protein ligase Kcmf1 from Drosophila melanogaster (Fruit fly).